A 146-amino-acid polypeptide reads, in one-letter code: SMR1 protein (146 aa).

The first 22 residues, 1 to 22 (MKSLYLIFGLWILLACFQSGEG), serve as a signal peptide directing secretion. Disordered stretches follow at residues 23–43 (VRGP…TLPH) and 99–146 (TAPD…GGGK). Polar residues predominate over residues 109–139 (PPTQLHSTEQANTKTDAKISNTTATTQNSTD). 2 N-linked (GlcNAc...) asparagine glycosylation sites follow: Asn-129 and Asn-136.

Several O-linked glycosylation sites might be present in the C-terminal part. Expressed predominantly in the acinar cells of the submandibular gland and to lesser extent in the prostate.

It is found in the secreted. In terms of biological role, sialorphin may be involved in the modulation of mineral balance between at least four systems: kidney, bone, tooth and circulation. Submandibular gland peptide T is able to directly or indirectly down-regulate cardiovascular depression induced by septic shock (endotoxin stimuli), or anaphylactic challenge (nematode antigen sensitization). Its function is as follows. Sialorphin is an endogenous inhibitor of neprilysin. Inhibits the breakdown of Met-enkephalin and substance P in isolated tissue from the dorsal zone of the rat spinal cord. Has an analgesic effect when administered to rats by intravenous injection. In Rattus norvegicus (Rat), this protein is SMR1 protein (Vcsa1).